The primary structure comprises 440 residues: Xaa-Pro dipeptidase (440 aa).

Residues Asp-244, Asp-255, His-335, Glu-380, and Glu-419 each coordinate Mn(2+).

This sequence belongs to the peptidase M24B family. Bacterial-type prolidase subfamily. Mn(2+) serves as cofactor.

It carries out the reaction Xaa-L-Pro dipeptide + H2O = an L-alpha-amino acid + L-proline. Splits dipeptides with a prolyl residue in the C-terminal position. The protein is Xaa-Pro dipeptidase of Shewanella loihica (strain ATCC BAA-1088 / PV-4).